We begin with the raw amino-acid sequence, 399 residues long: Protein DDI1 homolog 2 (399 aa).

Residues 1–81 form the Ubiquitin-like domain; it reads MLLTVYCVRR…VILRQKENAD (81 aa). The disordered stretch occupies residues 99–134; it reads IAVPGTSSPRQRQPPGTQQSHSSPGEITSSPQGLDN. Residues 103–131 are compositionally biased toward polar residues; that stretch reads GTSSPRQRQPPGTQQSHSSPGEITSSPQG. The residue at position 104 (T104) is a Phosphothreonine. Phosphoserine is present on residues S106, S121, S128, S150, and S194. The active site involves D252. Residues 376-395 carry the Ubiquitin-binding motif; that stretch reads EEIADQELAEALQKSAEDAE.

Belongs to the DDI1 family. As to quaternary structure, homodimer. Interacts with MCM6; PCNA; PSMD4; PSMD8; RPA2 and RPN2. Interacts with RTF2.

The protein localises to the cytoplasm. The protein resides in the cytosol. It localises to the chromosome. In terms of biological role, aspartic protease that mediates the cleavage of NFE2L1/NRF1 at 'Leu-104', thereby promoting release of NFE2L1/NRF1 from the endoplasmic reticulum membrane. Ubiquitination of NFE2L1/NRF1 is a prerequisite for cleavage, suggesting that DDI2 specifically recognizes and binds ubiquitinated NFE2L1/NRF1. Seems to act as a proteasomal shuttle which links the proteasome and replication fork proteins like RTF2. Required, with DDI1, for cellular survival following replication stress. Together or redudantly with DDI1, removes RTF2 from stalled forks to allow cell cycle progression after replication stress and maintains genome integrity. In Homo sapiens (Human), this protein is Protein DDI1 homolog 2.